We begin with the raw amino-acid sequence, 702 residues long: 1,4-alpha-glucan-branching enzyme (702 aa).

Alanine 2 carries the post-translational modification N-acetylalanine. Substrate contacts are provided by residues 62–63 (NE) and 91–93 (WAP). Tryptophan 107 is a binding site for (1,4-alpha-D-glucosyl)n. 118–121 (DYGK) is a binding site for substrate. Residue lysine 143 coordinates (1,4-alpha-D-glucosyl)n. Tyrosine 173 carries the phosphotyrosine modification. 333–336 (EILR) lines the substrate pocket. Aspartate 357 acts as the Nucleophile in catalysis. Glutamate 412 (proton donor) is an active-site residue.

It belongs to the glycosyl hydrolase 13 family. GlgB subfamily. In terms of assembly, monomer.

It carries out the reaction Transfers a segment of a (1-&gt;4)-alpha-D-glucan chain to a primary hydroxy group in a similar glucan chain.. The protein operates within glycan biosynthesis; glycogen biosynthesis. Glycogen-branching enzyme participates in the glycogen biosynthetic process along with glycogenin and glycogen synthase. Generates alpha-1,6-glucosidic branches from alpha-1,4-linked glucose chains, to increase solubility of the glycogen polymer. This Homo sapiens (Human) protein is 1,4-alpha-glucan-branching enzyme (GBE1).